The chain runs to 323 residues: UDP-galactose/UDP-glucose transporter 7 (323 aa).

Residues 1–10 lie on the Cytoplasmic side of the membrane; the sequence is MEVQAEMEPT. The helical transmembrane segment at 11–31 threads the bilayer; it reads SSISLVAAVSYGIASMAMVFI. The Lumenal segment spans residues 32-35; sequence NKAV. A helical transmembrane segment spans residues 36–58; that stretch reads IMQYPHSMTVLTLQQLATSLLIH. Residues 59-78 are Cytoplasmic-facing; sequence FGRRMGYTRAKGIDMATAKK. A helical membrane pass occupies residues 79-97; that stretch reads LLPVSIFYNANVAFALASL. Topologically, residues 98-101 are lumenal; the sequence is KGVN. A helical membrane pass occupies residues 102–124; the sequence is IPMYIAIKRLTPLAVLISGVLFG. The Cytoplasmic portion of the chain corresponds to 125–132; sequence KGKPTTQV. Residues 133 to 153 form a helical membrane-spanning segment; it reads ALSVLLTAAGCVIAALGDFSF. Position 154 (Asp-154) is a topological domain, lumenal. A helical transmembrane segment spans residues 155–175; sequence LFGYGLALTSVFFQTMYLVLV. The Cytoplasmic portion of the chain corresponds to 176–186; it reads EKSGAEDGLSS. A helical membrane pass occupies residues 187–207; the sequence is IEIMFYNSFLSLPFLSILIIV. The Lumenal portion of the chain corresponds to 208 to 226; that stretch reads TGEFPNSLSLLLAKCSYLP. The chain crosses the membrane as a helical span at residues 227-247; it reads FLVILILSLVMGIVLNFTMFL. Residues 248 to 252 are Cytoplasmic-facing; the sequence is CTIVN. The chain crosses the membrane as a helical span at residues 253 to 275; sequence SALTTTIVGVLKGVGSTTLGFVL. Residues 276-278 lie on the Lumenal side of the membrane; that stretch reads LGG. A helical membrane pass occupies residues 279-301; it reads VEVHALNVSGLVVNTAGGVWYSY. Residues 302–323 are Cytoplasmic-facing; sequence AKYRQKKAKPAKLMSDLEAHKK.

The protein belongs to the TPT transporter family. UGnT (TC 2.A.7.15) subfamily. In terms of tissue distribution, widely expressed with highest expression in roots.

The protein localises to the golgi apparatus membrane. Functionally, nucleotide-sugar transporter that transports UDP-glucose and UDP-galactose. Plays a role in lateral root and root hair development. In Arabidopsis thaliana (Mouse-ear cress), this protein is UDP-galactose/UDP-glucose transporter 7.